Consider the following 374-residue polypeptide: Phosphomevalonate kinase (374 aa).

Belongs to the GHMP kinase family. Homodimer. Mg(2+) is required as a cofactor.

It carries out the reaction (R)-5-phosphomevalonate + ATP = (R)-5-diphosphomevalonate + ADP. The protein operates within isoprenoid biosynthesis; isopentenyl diphosphate biosynthesis via mevalonate pathway; isopentenyl diphosphate from (R)-mevalonate: step 2/3. Functionally, catalyzes the phosphorylation of (R)-mevalonate 5-phosphate (MVAP) to (R)-mevalonate 5-diphosphate (MVAPP). Functions in the mevalonate (MVA) pathway leading to isopentenyl diphosphate (IPP), a key precursor for the biosynthesis of isoprenoid compounds. The protein is Phosphomevalonate kinase of Streptomyces sp. (strain CL190).